A 113-amino-acid chain; its full sequence is Large ribosomal subunit protein bL17 (113 aa).

Belongs to the bacterial ribosomal protein bL17 family. As to quaternary structure, part of the 50S ribosomal subunit. Contacts protein L32.

The sequence is that of Large ribosomal subunit protein bL17 from Alkaliphilus metalliredigens (strain QYMF).